Consider the following 172-residue polypeptide: Large ribosomal subunit protein uL10 (172 aa).

This sequence belongs to the universal ribosomal protein uL10 family. Part of the ribosomal stalk of the 50S ribosomal subunit. The N-terminus interacts with L11 and the large rRNA to form the base of the stalk. The C-terminus forms an elongated spine to which L12 dimers bind in a sequential fashion forming a multimeric L10(L12)X complex.

Its function is as follows. Forms part of the ribosomal stalk, playing a central role in the interaction of the ribosome with GTP-bound translation factors. This is Large ribosomal subunit protein uL10 from Xanthobacter autotrophicus (strain ATCC BAA-1158 / Py2).